Here is a 971-residue protein sequence, read N- to C-terminus: Translation initiation factor IF-2 (971 aa).

The span at 49-63 (HLRKSHGATDGDKRK) shows a compositional bias: basic and acidic residues. Disordered regions lie at residues 49-85 (HLRK…KART) and 99-386 (RDDV…PTEP). Residues 105–114 (GAEQGQAQVA) show a composition bias toward low complexity. Over residues 121 to 181 (ELKRREEEAR…EEEAAAKRAA (61 aa)) the composition is skewed to basic and acidic residues. Low complexity predominate over residues 182 to 200 (AEAAAAQQAAAQQAAAEQE). Residues 209 to 260 (DEARAAAERAAQREAAKKAEDAAREAADKARAEQEEISKRRAAAEAEARAIR) show a composition bias toward basic and acidic residues. Low complexity predominate over residues 303-325 (ARPAVKKPAGAAAPATTQAPAGA). The span at 355-368 (SSGGVDRGWRGGPK) shows a compositional bias: gly residues. In terms of domain architecture, tr-type G spans 471–640 (PRPPVVTVMG…LLQAEVLELK (170 aa)). The segment at 480–487 (GHVDHGKT) is G1. A GTP-binding site is contributed by 480–487 (GHVDHGKT). Residues 505–509 (GITQH) are G2. A G3 region spans residues 526–529 (DTPG). GTP-binding positions include 526–530 (DTPGH) and 580–583 (NKID). The segment at 580-583 (NKID) is G4. The segment at 616–618 (SAK) is G5.

This sequence belongs to the TRAFAC class translation factor GTPase superfamily. Classic translation factor GTPase family. IF-2 subfamily.

Its subcellular location is the cytoplasm. Functionally, one of the essential components for the initiation of protein synthesis. Protects formylmethionyl-tRNA from spontaneous hydrolysis and promotes its binding to the 30S ribosomal subunits. Also involved in the hydrolysis of GTP during the formation of the 70S ribosomal complex. This Burkholderia cenocepacia (strain ATCC BAA-245 / DSM 16553 / LMG 16656 / NCTC 13227 / J2315 / CF5610) (Burkholderia cepacia (strain J2315)) protein is Translation initiation factor IF-2.